Here is a 66-residue protein sequence, read N- to C-terminus: Small ribosomal subunit protein eS27 (66 aa).

Zn(2+) contacts are provided by cysteine 21, cysteine 24, cysteine 40, and cysteine 43. The C4-type zinc-finger motif lies at cysteine 21 to cysteine 43.

It belongs to the eukaryotic ribosomal protein eS27 family. Part of the 30S ribosomal subunit. Zn(2+) serves as cofactor.

This chain is Small ribosomal subunit protein eS27, found in Hyperthermus butylicus (strain DSM 5456 / JCM 9403 / PLM1-5).